A 264-amino-acid chain; its full sequence is RNA-binding protein pos-1 (264 aa).

A disordered region spans residues 56–82 (QDKETQNSASQPTSEQSLANRDPCTVP). A compositionally biased stretch (polar residues) spans 61 to 74 (QNSASQPTSEQSLA). 2 C3H1-type zinc fingers span residues 98–126 (AFKT…HGVH) and 141–169 (KYKT…HKIV). Residues Cys104, Cys113, Cys119, His123, Cys147, Cys156, Cys162, and His166 each coordinate Zn(2+).

Monomer.

The protein resides in the cytoplasm. RNA-binding protein that coordinates cell fate specification and differentiation during early embryogenesis. Binds to a consensus pos-1 recognition element (PRE) consisting of the sequence 5'-UA(U 2-3)RGD(N 1-3)G-3', where R is any purine, D is A, G, or U, and N is any base. The PRE motif is found within the 3' untranslated region of many maternal transcripts required for early development. Binds to the 3' untranslated region (UTR) of Notch receptor homolog glp-1, thereby repressing glp-1 translation in the posterior blastomeres in the embryo. Binding to glp-1 3' UTR excludes cell fate regulator gld-1 binding to an overlapping binding site in the glp-1 3' UTR. Binds to the neg-1 3'UTR thereby opposing neg-1 expression and cytoplasmic polyadenylation of the neg-1 mRNA poly(A) tail promoted by gld-2 and gld-3. By inhibiting the cytoplasmic lengthening of neg-1 mRNA, restricts the accumulation of neg-1 protein and promotes endo-mesoderm development in anterior blastomeres. Essential for germline specification. This Caenorhabditis elegans protein is RNA-binding protein pos-1.